Reading from the N-terminus, the 1072-residue chain is Carbamoyl phosphate synthase large chain (1072 aa).

The tract at residues 1–401 (MPKRLDINTI…SLLKAVRSLE (401 aa)) is carboxyphosphate synthetic domain. ATP-binding residues include Arg129, Arg169, Gly175, Gly176, Lys208, Ile210, Glu215, Gly241, Val242, His243, Gln284, and Glu298. Residues 133–327 (RTLMQDLNEP…IAKLAAKIAV (195 aa)) form the ATP-grasp 1 domain. 3 residues coordinate Mg(2+): Gln284, Glu298, and Asn300. Residues Gln284, Glu298, and Asn300 each coordinate Mn(2+). The segment at 402–546 (LGIYHLELDH…YSTYADENES (145 aa)) is oligomerization domain. Residues 547–929 (IVTDRKSVVV…ALYKGLVASG (383 aa)) form a carbamoyl phosphate synthetic domain region. The ATP-grasp 2 domain occupies 671 to 861 (EAALTKLGIP…MANVATKVIL (191 aa)). ATP is bound by residues Arg707, Arg746, Glu752, Gly777, Val778, His779, Ser780, Gln820, and Glu832. Gln820, Glu832, and Asn834 together coordinate Mg(2+). Positions 820, 832, and 834 each coordinate Mn(2+). Residues 930-1072 (INIPTHGSVI…QTKRHEVVHA (143 aa)) form the MGS-like domain. Positions 930-1072 (INIPTHGSVI…QTKRHEVVHA (143 aa)) are allosteric domain.

The protein belongs to the CarB family. Composed of two chains; the small (or glutamine) chain promotes the hydrolysis of glutamine to ammonia, which is used by the large (or ammonia) chain to synthesize carbamoyl phosphate. Tetramer of heterodimers (alpha,beta)4. Requires Mg(2+) as cofactor. It depends on Mn(2+) as a cofactor.

It catalyses the reaction hydrogencarbonate + L-glutamine + 2 ATP + H2O = carbamoyl phosphate + L-glutamate + 2 ADP + phosphate + 2 H(+). The enzyme catalyses hydrogencarbonate + NH4(+) + 2 ATP = carbamoyl phosphate + 2 ADP + phosphate + 2 H(+). It functions in the pathway amino-acid biosynthesis; L-arginine biosynthesis; carbamoyl phosphate from bicarbonate: step 1/1. The protein operates within pyrimidine metabolism; UMP biosynthesis via de novo pathway; (S)-dihydroorotate from bicarbonate: step 1/3. Functionally, large subunit of the glutamine-dependent carbamoyl phosphate synthetase (CPSase). CPSase catalyzes the formation of carbamoyl phosphate from the ammonia moiety of glutamine, carbonate, and phosphate donated by ATP, constituting the first step of 2 biosynthetic pathways, one leading to arginine and/or urea and the other to pyrimidine nucleotides. The large subunit (synthetase) binds the substrates ammonia (free or transferred from glutamine from the small subunit), hydrogencarbonate and ATP and carries out an ATP-coupled ligase reaction, activating hydrogencarbonate by forming carboxy phosphate which reacts with ammonia to form carbamoyl phosphate. In Bacillus cereus (strain B4264), this protein is Carbamoyl phosphate synthase large chain.